The following is a 969-amino-acid chain: MEAGAMGGSSFLSFSSGPSAETSPSSLSPPTSSSPSPSPQLVSDSVESLHAKRPLAQSSRSSSRTAASTCFCWQGEGQENEAAPTISQEERRGGSMTAASAGHLETAREEAARCLGCSYTGEERRGASSATSVLSLGGERGRPPSRSSSLWTFSGLLSPLAFRSRRCCPQFSSSSSPLSPLPHPRGAPASACGSAVITDRAGRPASPLSFSRLASPVSDPSGVCPPRVVAARVWRLLSSVLFSLVNCARLFPRRLSRRPDPLRKPRAQVWSASSRSLQALLLATVALFAACSSLHGSSLLGAQAASPTPPFLSLSSSPRSLASDSAKKGSNAPEQSREQRGEREGERQRPDKGEENGETEETFPAASGVVPAPGLKVADLPRTGPPVDLLGLPIRKKVFRARLYGSMFSYAYYFLDILVGTPPQRASVILDTGSSLLAFPCAGCSECGQHLDPAMDTSRSATGEWIDCKEQERCFGSCSGGTPLGGLGGGGVSSMRRCMYTQTYSEGSAIRGIYFSDVVALGEVEQKNPPVRYDFVGCHTQETNLFVTQKAAGIFGISFPKGHRQPTLLDVMFGHTNLVDKKMFSVCISEDGGLLTVGGYEPTLLVAPPESESTPATEALRPVAGESASRRISEKTSPHHAALLTWTSIISHSTYRVPLSGMEVEGLVLGSGVDDFGNTMVDSGTDLSSIFPPIKVSFGDEKNSQVWWWPEGYLYRRTGGYFCDGLDDNKVSASVLGLSFFKNKQVLFDREQDRVGFAAAKCPSFFLDQRPRGPDSGDGPKGRPTAPFTVPPLRVPVPMDGGGVPGDAKQPEGLPLSPQQLWVAAALVVVAILIAVTVILLHTIKRPSRSSAVVPAPSAPRLPFAQNSKSAGRFARGLGHGALGVGNPVYVQRTQRYREVQEAQPHTADAYYDVEEDRFTGEDDGDFFGDDSVPSAEEQETAPSLSLREESSPFSASQSTLLDLPLGGE.

The N-terminal stretch at 1 to 22 is a signal peptide; it reads MEAGAMGGSSFLSFSSGPSAET. Over residues 1-45 the composition is skewed to low complexity; it reads MEAGAMGGSSFLSFSSGPSAETSPSSLSPPTSSSPSPSPQLVSDS. Disordered stretches follow at residues 1–65, 79–104, 128–149, 173–193, and 311–382; these read MEAG…SSRT, ENEAAPTISQEERRGGSMTAASAGHL, SSATSVLSLGGERGRPPSRSSS, SSSSPLSPLPHPRGAPASACG, and FLSL…DLPR. Over 23–820 the chain is Lumenal; the sequence is SPSSLSPPTS…PEGLPLSPQQ (798 aa). Positions 311–324 are enriched in low complexity; it reads FLSLSSSPRSLASD. The span at 335 to 355 shows a compositional bias: basic and acidic residues; it reads QSREQRGEREGERQRPDKGEE. The 346-residue stretch at 413-758 folds into the Peptidase A1 domain; the sequence is YFLDILVGTP…DREQDRVGFA (346 aa). Asp431 is a catalytic residue. Residues 608 to 635 form a disordered region; that stretch reads PPESESTPATEALRPVAGESASRRISEK. Residue Asp682 is part of the active site. Residues 768–794 are disordered; that stretch reads DQRPRGPDSGDGPKGRPTAPFTVPPLR. Residues 769 to 781 show a composition bias toward basic and acidic residues; sequence QRPRGPDSGDGPK. The chain crosses the membrane as a helical span at residues 821 to 841; it reads LWVAAALVVVAILIAVTVILL. Residues 842–969 lie on the Cytoplasmic side of the membrane; that stretch reads HTIKRPSRSS…TLLDLPLGGE (128 aa). A disordered region spans residues 922–969; that stretch reads EDDGDFFGDDSVPSAEEQETAPSLSLREESSPFSASQSTLLDLPLGGE. Over residues 952–961 the composition is skewed to polar residues; that stretch reads SPFSASQSTL.

The protein belongs to the peptidase A1 family. May be auto-cleaved to produce a 55 kDa form.

The protein localises to the golgi apparatus membrane. Functionally, in tachyzoites, plays an essential role in the export of several dense granule proteins into the host cell by cleaving the localization motif RRLxx (termed Toxoplasma export element (TEXEL)) located downstream of the N-terminal secretory signal sequence. However, can also regulate the export of proteins that lack the TEXEL motif, such as GRA24. Requires Arg at P3 and P2, and Leu at P1 in the substrate TEXEL motif and, specifically, cleaves after Leu. Cleaves GRA16; proteolytic cleavage is essential for the correct trafficking of GRA16 from the parasite into the infected host nucleus. Cleaves GRA19 and GRA20. Cleaves MYR1. Cleaves LCAT, GRA44, GRA46, GRA46, ROP35/WNG1 and ROP34/WNG2. By regulating the export of dense granule proteins into the host cell, regulates multiple processes during tachyzoite infection of host cells, including recruitment of host mitochondria to the parasitophorous vacuole (PV), formation of the nanotubular network (NTN) or intravacuolar network (IVN) which are membranous tubules that bud from the PV membrane into the vacuolar lumen and, up-regulation of host cell genes to facilitate the parasite infection and modulate the host innate immune response. At the bradyzoite stage, also involved in the formation of the cyst wall. In Toxoplasma gondii, this protein is Aspartic protease 5.